Reading from the N-terminus, the 691-residue chain is Elongation factor G 2 (691 aa).

A tr-type G domain is found at 8–287 (DRYRNIGIMA…AVVDYLPSPL (280 aa)). GTP contacts are provided by residues 17–24 (AHIDAGKT), 85–89 (DTPGH), and 139–142 (NKMD).

It belongs to the TRAFAC class translation factor GTPase superfamily. Classic translation factor GTPase family. EF-G/EF-2 subfamily.

Its subcellular location is the cytoplasm. In terms of biological role, catalyzes the GTP-dependent ribosomal translocation step during translation elongation. During this step, the ribosome changes from the pre-translocational (PRE) to the post-translocational (POST) state as the newly formed A-site-bound peptidyl-tRNA and P-site-bound deacylated tRNA move to the P and E sites, respectively. Catalyzes the coordinated movement of the two tRNA molecules, the mRNA and conformational changes in the ribosome. This chain is Elongation factor G 2, found in Myxococcus xanthus (strain DK1622).